The chain runs to 545 residues: MAAKEVVFGNDARVKMLAGVNILANAVKVTLGPKGRNVVLDKSFGSPLITKDGVSVAKEIELEDKFENMGAQMVKEVASKANDAAGDGTTTATVLAQAIVTEGLKAVAAGMNPMDLKRGIDKAVIAAVAELKALSQPCADSKAIAQVATISANSDESIGEIIATAMEKVGKEGVITVEEGQALENELDVVEGMQFDRGYLSPYFINKPETGSVELDHPFVLLVDKKISNIRELLPILEGLAKTGKPLLIVAEDVEGEALATLVVNNMRGIVKVAAVKAPGFGDRRKAMLQDVAILTGGTVIAEEIGLELEKATLEDLGTAKRVVITKDNTTIIDGNGEQAQIEARVSQIKQQIEESTSDYDKEKLQERMAKLAGGVAVIKVGAATEVEMKEKKARVEDALHATRAAVEEGVVPGGGVALVRVASKIAELEVLNEDQKHGVVIALRAMEAPLRQIATNAGEEASVVANTVKNGSGNYGYNAGNDTYGDMLEMGILDPTKVTRCALQFAASIAGLMITTEAMVAEIPQNSAPDMGGMGGMGGMGGMM.

ATP-binding positions include 30-33 (TLGP), K51, 87-91 (DGTTT), G415, and D495.

The protein belongs to the chaperonin (HSP60) family. In terms of assembly, forms a cylinder of 14 subunits composed of two heptameric rings stacked back-to-back. Interacts with the co-chaperonin GroES.

The protein localises to the cytoplasm. The enzyme catalyses ATP + H2O + a folded polypeptide = ADP + phosphate + an unfolded polypeptide.. Its function is as follows. Together with its co-chaperonin GroES, plays an essential role in assisting protein folding. The GroEL-GroES system forms a nano-cage that allows encapsulation of the non-native substrate proteins and provides a physical environment optimized to promote and accelerate protein folding. The sequence is that of Chaperonin GroEL from Shewanella sp. (strain W3-18-1).